Consider the following 627-residue polypeptide: 1-deoxy-D-xylulose-5-phosphate synthase (627 aa).

Residues His72 and 113 to 115 (GHS) each bind thiamine diphosphate. Asp144 contacts Mg(2+). Residues 145-146 (GA), Asn173, Tyr283, and Glu366 each bind thiamine diphosphate. Position 173 (Asn173) interacts with Mg(2+).

It belongs to the transketolase family. DXPS subfamily. Homodimer. Requires Mg(2+) as cofactor. The cofactor is thiamine diphosphate.

It carries out the reaction D-glyceraldehyde 3-phosphate + pyruvate + H(+) = 1-deoxy-D-xylulose 5-phosphate + CO2. It functions in the pathway metabolic intermediate biosynthesis; 1-deoxy-D-xylulose 5-phosphate biosynthesis; 1-deoxy-D-xylulose 5-phosphate from D-glyceraldehyde 3-phosphate and pyruvate: step 1/1. Functionally, catalyzes the acyloin condensation reaction between C atoms 2 and 3 of pyruvate and glyceraldehyde 3-phosphate to yield 1-deoxy-D-xylulose-5-phosphate (DXP). This chain is 1-deoxy-D-xylulose-5-phosphate synthase, found in Macrococcus caseolyticus (strain JCSC5402) (Macrococcoides caseolyticum).